A 211-amino-acid polypeptide reads, in one-letter code: Uridine kinase (211 aa).

An ATP-binding site is contributed by 15–22 (GGSGSGKT).

The protein belongs to the uridine kinase family.

It localises to the cytoplasm. The enzyme catalyses uridine + ATP = UMP + ADP + H(+). It carries out the reaction cytidine + ATP = CMP + ADP + H(+). It functions in the pathway pyrimidine metabolism; CTP biosynthesis via salvage pathway; CTP from cytidine: step 1/3. The protein operates within pyrimidine metabolism; UMP biosynthesis via salvage pathway; UMP from uridine: step 1/1. The sequence is that of Uridine kinase from Latilactobacillus sakei subsp. sakei (strain 23K) (Lactobacillus sakei subsp. sakei).